The primary structure comprises 579 residues: 2-isopropylmalate synthase (579 aa).

The Pyruvate carboxyltransferase domain occupies 40 to 314; it reads PRWCAVDLRD…DPMIDFSDID (275 aa). Residues aspartate 49, histidine 253, histidine 255, and asparagine 289 each coordinate Mg(2+). Positions 456 to 579 are regulatory domain; the sequence is SDEEQAQWGR…VNRAVRDAQA (124 aa).

The protein belongs to the alpha-IPM synthase/homocitrate synthase family. LeuA type 2 subfamily. As to quaternary structure, homodimer. Mg(2+) is required as a cofactor.

The protein localises to the cytoplasm. It carries out the reaction 3-methyl-2-oxobutanoate + acetyl-CoA + H2O = (2S)-2-isopropylmalate + CoA + H(+). It participates in amino-acid biosynthesis; L-leucine biosynthesis; L-leucine from 3-methyl-2-oxobutanoate: step 1/4. Functionally, catalyzes the condensation of the acetyl group of acetyl-CoA with 3-methyl-2-oxobutanoate (2-ketoisovalerate) to form 3-carboxy-3-hydroxy-4-methylpentanoate (2-isopropylmalate). The sequence is that of 2-isopropylmalate synthase from Paenarthrobacter aurescens (strain TC1).